Consider the following 393-residue polypeptide: S-adenosylmethionine synthase 3 (393 aa).

Glu-43 serves as a coordination point for K(+). Glu-56 and Gln-99 together coordinate L-methionine. ATP is bound by residues 167–169 (DGK), 235–238 (SGRF), Asp-246, 252–253 (RK), Ala-269, Lys-273, and Lys-277. Asp-246 serves as a coordination point for L-methionine. Lys-277 is a binding site for L-methionine.

Belongs to the AdoMet synthase family. Homotetramer. It depends on Mn(2+) as a cofactor. Requires Mg(2+) as cofactor. The cofactor is Co(2+). K(+) is required as a cofactor.

It localises to the cytoplasm. It carries out the reaction L-methionine + ATP + H2O = S-adenosyl-L-methionine + phosphate + diphosphate. It participates in amino-acid biosynthesis; S-adenosyl-L-methionine biosynthesis; S-adenosyl-L-methionine from L-methionine: step 1/1. In terms of biological role, catalyzes the formation of S-adenosylmethionine from methionine and ATP. The reaction comprises two steps that are both catalyzed by the same enzyme: formation of S-adenosylmethionine (AdoMet) and triphosphate, and subsequent hydrolysis of the triphosphate. The polypeptide is S-adenosylmethionine synthase 3 (SAM3) (Actinidia chinensis var. chinensis (Chinese soft-hair kiwi)).